A 451-amino-acid polypeptide reads, in one-letter code: UDP-N-acetylmuramoylalanine--D-glutamate ligase (451 aa).

Residue 119–125 (GSNGKTT) coordinates ATP.

It belongs to the MurCDEF family.

The protein resides in the cytoplasm. The enzyme catalyses UDP-N-acetyl-alpha-D-muramoyl-L-alanine + D-glutamate + ATP = UDP-N-acetyl-alpha-D-muramoyl-L-alanyl-D-glutamate + ADP + phosphate + H(+). Its pathway is cell wall biogenesis; peptidoglycan biosynthesis. Cell wall formation. Catalyzes the addition of glutamate to the nucleotide precursor UDP-N-acetylmuramoyl-L-alanine (UMA). The chain is UDP-N-acetylmuramoylalanine--D-glutamate ligase from Streptococcus mutans serotype c (strain ATCC 700610 / UA159).